The following is a 190-amino-acid chain: NAD(P)H-quinone oxidoreductase subunit I (190 aa).

4Fe-4S ferredoxin-type domains follow at residues 55-84 (GRIH…VDWT) and 95-124 (KHYS…MTEE). [4Fe-4S] cluster is bound by residues Cys-64, Cys-67, Cys-70, Cys-74, Cys-104, Cys-107, Cys-110, and Cys-114. The tract at residues 169 to 190 (IEPHDLPAGSQRAGKRPEEITD) is disordered.

This sequence belongs to the complex I 23 kDa subunit family. As to quaternary structure, NDH-1 is composed of at least 11 different subunits. [4Fe-4S] cluster serves as cofactor.

Its subcellular location is the cellular thylakoid membrane. It carries out the reaction a plastoquinone + NADH + (n+1) H(+)(in) = a plastoquinol + NAD(+) + n H(+)(out). The catalysed reaction is a plastoquinone + NADPH + (n+1) H(+)(in) = a plastoquinol + NADP(+) + n H(+)(out). NDH-1 shuttles electrons from an unknown electron donor, via FMN and iron-sulfur (Fe-S) centers, to quinones in the respiratory and/or the photosynthetic chain. The immediate electron acceptor for the enzyme in this species is believed to be plastoquinone. Couples the redox reaction to proton translocation, and thus conserves the redox energy in a proton gradient. The chain is NAD(P)H-quinone oxidoreductase subunit I from Microcystis aeruginosa (strain NIES-843 / IAM M-2473).